The primary structure comprises 335 residues: tRNA N6-adenosine threonylcarbamoyltransferase (335 aa).

Residues His112 and His116 each contribute to the Fe cation site. Residues 134–138, Asp167, Gly180, and Asn273 contribute to the substrate site; that span reads VVSGG. Asp301 is a Fe cation binding site.

Belongs to the KAE1 / TsaD family. Requires Fe(2+) as cofactor.

It is found in the cytoplasm. It catalyses the reaction L-threonylcarbamoyladenylate + adenosine(37) in tRNA = N(6)-L-threonylcarbamoyladenosine(37) in tRNA + AMP + H(+). Its function is as follows. Required for the formation of a threonylcarbamoyl group on adenosine at position 37 (t(6)A37) in tRNAs that read codons beginning with adenine. Is involved in the transfer of the threonylcarbamoyl moiety of threonylcarbamoyl-AMP (TC-AMP) to the N6 group of A37, together with TsaE and TsaB. TsaD likely plays a direct catalytic role in this reaction. The polypeptide is tRNA N6-adenosine threonylcarbamoyltransferase (Shouchella clausii (strain KSM-K16) (Alkalihalobacillus clausii)).